Consider the following 175-residue polypeptide: Nucleoside diphosphate kinase 6 (175 aa).

6 residues coordinate ATP: Lys-8, Phe-57, Arg-85, Thr-91, Arg-105, and Asn-115. The active-site Pros-phosphohistidine intermediate is the His-118.

The protein belongs to the NDK family. It depends on Mg(2+) as a cofactor.

It carries out the reaction a 2'-deoxyribonucleoside 5'-diphosphate + ATP = a 2'-deoxyribonucleoside 5'-triphosphate + ADP. It catalyses the reaction a ribonucleoside 5'-diphosphate + ATP = a ribonucleoside 5'-triphosphate + ADP. Major role in the synthesis of nucleoside triphosphates other than ATP. The ATP gamma phosphate is transferred to the NDP beta phosphate via a ping-pong mechanism, using a phosphorylated active-site intermediate. The protein is Nucleoside diphosphate kinase 6 (Nme6) of Rattus norvegicus (Rat).